The following is a 622-amino-acid chain: Meiotic expression up-regulated protein 25 (622 aa).

The chain is Meiotic expression up-regulated protein 25 (meu25) from Schizosaccharomyces pombe (strain 972 / ATCC 24843) (Fission yeast).